We begin with the raw amino-acid sequence, 757 residues long: 5-methyltetrahydropteroyltriglutamate--homocysteine methyltransferase (757 aa).

5-methyltetrahydropteroyltri-L-glutamate is bound by residues 15-18 (RELK) and lysine 114. Residues 428–430 (IGS) and glutamate 481 contribute to the L-homocysteine site. Residues 428–430 (IGS) and glutamate 481 contribute to the L-methionine site. Residues 512–513 (RC) and tryptophan 558 contribute to the 5-methyltetrahydropteroyltri-L-glutamate site. Aspartate 596 serves as a coordination point for L-homocysteine. Aspartate 596 is an L-methionine binding site. Glutamate 602 contributes to the 5-methyltetrahydropteroyltri-L-glutamate binding site. Positions 639, 641, and 663 each coordinate Zn(2+). The active-site Proton donor is histidine 692. Cysteine 724 is a Zn(2+) binding site.

This sequence belongs to the vitamin-B12 independent methionine synthase family. Zn(2+) serves as cofactor.

The catalysed reaction is 5-methyltetrahydropteroyltri-L-glutamate + L-homocysteine = tetrahydropteroyltri-L-glutamate + L-methionine. It participates in amino-acid biosynthesis; L-methionine biosynthesis via de novo pathway; L-methionine from L-homocysteine (MetE route): step 1/1. Functionally, catalyzes the transfer of a methyl group from 5-methyltetrahydrofolate to homocysteine resulting in methionine formation. In Lactococcus lactis subsp. cremoris (strain SK11), this protein is 5-methyltetrahydropteroyltriglutamate--homocysteine methyltransferase.